A 616-amino-acid polypeptide reads, in one-letter code: Replication protein A 70 kDa DNA-binding subunit (616 aa).

Met-1 is subject to N-acetylmethionine. Residues Lys-22 and Lys-88 each participate in a glycyl lysine isopeptide (Lys-Gly) (interchain with G-Cter in ubiquitin) cross-link. Positions 121–154 (GLGQPQVAPPAPAASPAASSRPQPQNGSSGMGST) are disordered. The segment covering 134–145 (ASPAASSRPQPQ) has biased composition (low complexity). N6-acetyllysine; alternate occurs at positions 163 and 167. Residues Lys-163 and Lys-167 each participate in a glycyl lysine isopeptide (Lys-Gly) (interchain with G-Cter in ubiquitin); alternate cross-link. Thr-180 is modified (phosphothreonine). Lys-183 is covalently cross-linked (Glycyl lysine isopeptide (Lys-Gly) (interchain with G-Cter in ubiquitin)). Residue Thr-191 is modified to Phosphothreonine. The segment at residues 197–281 (WTICARVTNK…VKNDYEMTFN (85 aa)) is a DNA-binding region (OB). Glycyl lysine isopeptide (Lys-Gly) (interchain with G-Cter in ubiquitin) cross-links involve residues Lys-220 and Lys-244. An N6-acetyllysine; alternate modification is found at Lys-259. Lys-259 is covalently cross-linked (Glycyl lysine isopeptide (Lys-Gly) (interchain with G-Cter in ubiquitin); alternate). Residues Lys-267 and Lys-331 each participate in a glycyl lysine isopeptide (Lys-Gly) (interchain with G-Cter in ubiquitin) cross-link. Residue Ser-384 is modified to Phosphoserine. Residues Lys-410 and Lys-431 each participate in a glycyl lysine isopeptide (Lys-Gly) (interchain with G-Cter in ubiquitin) cross-link. Lys-449 participates in a covalent cross-link: Glycyl lysine isopeptide (Lys-Gly) (interchain with G-Cter in SUMO). Lys-458 participates in a covalent cross-link: Glycyl lysine isopeptide (Lys-Gly) (interchain with G-Cter in ubiquitin). A C4-type zinc finger spans residues 481 to 503 (CPTQDCNKKVIDQQNGLYRCEKC). A Glycyl lysine isopeptide (Lys-Gly) (interchain with G-Cter in ubiquitin) cross-link involves residue Lys-553. Residue Lys-577 forms a Glycyl lysine isopeptide (Lys-Gly) (interchain with G-Cter in SUMO) linkage.

It belongs to the replication factor A protein 1 family. In terms of assembly, component of the canonical replication protein A complex (RPA), a heterotrimer composed of RPA1, RPA2 and RPA3. Also a component of the aRPA, the alternative replication protein A complex, a trimeric complex similar to the replication protein A complex/RPA but where RPA1 and RPA3 are associated with RPA4 instead of RPA2. The DNA-binding activity may reside exclusively on the RPA1 subunit. Interacts with PRPF19; the PRP19-CDC5L complex is recruited to the sites of DNA repair where it ubiquitinates the replication protein A complex (RPA). Interacts with RIPK1. Interacts with the polymerase alpha subunit POLA1/p180; this interaction stabilizes the replicative complex and reduces the misincorporation rate of DNA polymerase alpha by acting as a fidelity clamp. Interacts with RAD51 and SENP6 to regulate DNA repair. Interacts with HELB; this interaction promotes HELB recruitment to chromatin following DNA damage. Interacts with PRIMPOL; leading to recruit PRIMPOL on chromatin and stimulate its DNA primase activity. Interacts with XPA; the interaction is direct and associates XPA with the RPA complex. Interacts with ETAA1; the interaction is direct and promotes ETAA1 recruitment at stalled replication forks. Interacts with RPA1; this interaction associates HROB with the RPA complex. Interacts (when poly-ADP-ribosylated) with HTATSF1. Interacts with BRIP1/FANCJ via this RPA1 subunit; following DNA damage they colocalize in foci in the nucleus. In terms of processing, DNA damage-induced 'Lys-63'-linked polyubiquitination by PRPF19 mediates ATRIP recruitment to the RPA complex at sites of DNA damage and activation of ATR. Ubiquitinated by RFWD3 at stalled replication forks in response to DNA damage: ubiquitination by RFWD3 does not lead to degradation by the proteasome and promotes removal of the RPA complex from stalled replication forks, promoting homologous recombination. Post-translationally, sumoylated on lysine residues Lys-449 and Lys-577, with Lys-449 being the major site. Sumoylation promotes recruitment of RAD51 to the DNA damage foci to initiate DNA repair through homologous recombination. Desumoylated by SENP6. Poly-ADP-ribosylated by PARP1; promoting recruitment of HTATSF1.

It is found in the nucleus. Its subcellular location is the PML body. Functionally, as part of the heterotrimeric replication protein A complex (RPA/RP-A), binds and stabilizes single-stranded DNA intermediates that form during DNA replication or upon DNA stress. It prevents their reannealing and in parallel, recruits and activates different proteins and complexes involved in DNA metabolism. Thereby, it plays an essential role both in DNA replication and the cellular response to DNA damage. In the cellular response to DNA damage, the RPA complex controls DNA repair and DNA damage checkpoint activation. Through recruitment of ATRIP activates the ATR kinase a master regulator of the DNA damage response. It is required for the recruitment of the DNA double-strand break repair factors RAD51 and RAD52 to chromatin in response to DNA damage. Also recruits to sites of DNA damage proteins like XPA and XPG that are involved in nucleotide excision repair and is required for this mechanism of DNA repair. Also plays a role in base excision repair (BER) probably through interaction with UNG. Also recruits SMARCAL1/HARP, which is involved in replication fork restart, to sites of DNA damage. Plays a role in telomere maintenance. As part of the alternative replication protein A complex, aRPA, binds single-stranded DNA and probably plays a role in DNA repair. Compared to the RPA2-containing, canonical RPA complex, may not support chromosomal DNA replication and cell cycle progression through S-phase. The aRPA may not promote efficient priming by DNA polymerase alpha but could support DNA synthesis by polymerase delta in presence of PCNA and replication factor C (RFC), the dual incision/excision reaction of nucleotide excision repair and RAD51-dependent strand exchange. RPA stimulates 5'-3' helicase activity of the BRIP1/FANCJ. The chain is Replication protein A 70 kDa DNA-binding subunit (RPA1) from Homo sapiens (Human).